A 380-amino-acid polypeptide reads, in one-letter code: SAM and SH3 domain-containing protein 3 (380 aa).

2 disordered regions span residues 1-76 (MLRR…GKKW) and 96-168 (LSEE…SPAP). Low complexity predominate over residues 22–41 (LQRSSSFKDFAKSKPSSPVV). A phosphoserine mark is found at serine 27, serine 34, and serine 42. Threonine 61 is modified (phosphothreonine). Phosphoserine is present on serine 97. At threonine 103 the chain carries Phosphothreonine. Serine 110 carries the post-translational modification Phosphoserine. Residue threonine 112 is modified to Phosphothreonine. Phosphoserine is present on residues serine 113 and serine 120. A compositionally biased stretch (polar residues) spans 141-150 (LSRQTSTGSE). An SH3 domain is found at 173–234 (PFCGRARVHT…KFIYVDVLPE (62 aa)). Residues 252–316 (PKPKTLHELL…LTAAELLLDY (65 aa)) enclose the SAM domain. Residue threonine 318 is modified to Phosphothreonine. A compositionally biased stretch (acidic residues) spans 318 to 327 (TGSEEAEEGA). The segment at 318–380 (TGSEEAEEGA…LQGLSLSGAP (63 aa)) is disordered. Serine 320 carries the phosphoserine modification. The span at 369–380 (EQLQGLSLSGAP) shows a compositional bias: polar residues.

In terms of tissue distribution, preferentially expressed in lymphoid tissues. Expressed in bone marrow, thymus, spleen, lymph nodes and Peyer patches of gut. In the spleen and lymph nodes, expressed in both T- and B-cells. In the thymus, in the medulla and cortex.

Functionally, may function as a signaling adapter protein in lymphocytes. This Mus musculus (Mouse) protein is SAM and SH3 domain-containing protein 3 (Sash3).